A 205-amino-acid chain; its full sequence is High frequency lysogenization protein HflD homolog (205 aa).

It belongs to the HflD family.

The protein resides in the cytoplasm. Its subcellular location is the cell inner membrane. The sequence is that of High frequency lysogenization protein HflD homolog from Shewanella sp. (strain W3-18-1).